Reading from the N-terminus, the 443-residue chain is Trigger factor (443 aa).

The PPIase FKBP-type domain occupies Lys-163–Pro-249.

This sequence belongs to the FKBP-type PPIase family. Tig subfamily.

It localises to the cytoplasm. The enzyme catalyses [protein]-peptidylproline (omega=180) = [protein]-peptidylproline (omega=0). Involved in protein export. Acts as a chaperone by maintaining the newly synthesized protein in an open conformation. Functions as a peptidyl-prolyl cis-trans isomerase. The chain is Trigger factor from Desulfosudis oleivorans (strain DSM 6200 / JCM 39069 / Hxd3) (Desulfococcus oleovorans).